We begin with the raw amino-acid sequence, 245 residues long: tRNA (guanine-N(1)-)-methyltransferase (245 aa).

Residues glycine 112 and isoleucine 132–leucine 137 contribute to the S-adenosyl-L-methionine site.

Belongs to the RNA methyltransferase TrmD family. Homodimer.

The protein localises to the cytoplasm. The enzyme catalyses guanosine(37) in tRNA + S-adenosyl-L-methionine = N(1)-methylguanosine(37) in tRNA + S-adenosyl-L-homocysteine + H(+). Its function is as follows. Specifically methylates guanosine-37 in various tRNAs. This Geobacter sulfurreducens (strain ATCC 51573 / DSM 12127 / PCA) protein is tRNA (guanine-N(1)-)-methyltransferase.